Here is a 344-residue protein sequence, read N- to C-terminus: Adenosine kinase 1 (344 aa).

Residue Asp299 is part of the active site.

Belongs to the carbohydrate kinase PfkB family. Interacts with the begomovirus AL2 protein and the curtovirus L2 protein. Mg(2+) serves as cofactor. Widely expressed.

It catalyses the reaction adenosine + ATP = AMP + ADP + H(+). Its pathway is purine metabolism; AMP biosynthesis via salvage pathway; AMP from adenosine: step 1/1. Its activity is regulated as follows. Inactivated by the begomovirus AL2 protein or the curtovirus L2 protein. Its function is as follows. ATP dependent phosphorylation of adenosine and other related nucleoside analogs to monophosphate derivatives. Essential to sustain methyl recycling. The protein is Adenosine kinase 1 of Arabidopsis thaliana (Mouse-ear cress).